The sequence spans 348 residues: Tetraacyldisaccharide 4'-kinase (348 aa).

Position 54 to 61 (54 to 61) interacts with ATP; the sequence is TVGGAGKT.

Belongs to the LpxK family.

It carries out the reaction a lipid A disaccharide + ATP = a lipid IVA + ADP + H(+). It participates in glycolipid biosynthesis; lipid IV(A) biosynthesis; lipid IV(A) from (3R)-3-hydroxytetradecanoyl-[acyl-carrier-protein] and UDP-N-acetyl-alpha-D-glucosamine: step 6/6. In terms of biological role, transfers the gamma-phosphate of ATP to the 4'-position of a tetraacyldisaccharide 1-phosphate intermediate (termed DS-1-P) to form tetraacyldisaccharide 1,4'-bis-phosphate (lipid IVA). The chain is Tetraacyldisaccharide 4'-kinase from Agrobacterium fabrum (strain C58 / ATCC 33970) (Agrobacterium tumefaciens (strain C58)).